Consider the following 541-residue polypeptide: Putative transferase YhbX (541 aa).

Over 1–60 (MTVFNKFARTFKSHWLLYLCVIVFGITNLVASSGAHMVQRLLFFVLTILVVKRISSLPLR) the chain is Periplasmic. Residues 61–81 (LLVAAPFVLLTAADMSISLYS) form a helical membrane-spanning segment. Residues 82–110 (WCTFGTTFNDGFAISVLQSDPDEVVKMLG) are Cytoplasmic-facing. The chain crosses the membrane as a helical span at residues 111–131 (MYIPYLCAFAFLSLLFLAVII). The Periplasmic segment spans residues 132–141 (KYDVSLPTKK). The helical transmembrane segment at 142-162 (VTGILLLIVISGSLFSACQFA) threads the bilayer. Over 163–264 (YKDAKNKKAF…RKQIKLFNQA (102 aa)) the chain is Cytoplasmic. Residues 265-285 (ISGAPYTALSVPLSLTADSVL) traverse the membrane as a helical segment. The Periplasmic segment spans residues 286-541 (SHDIHNYPDN…QGNPTPEGQG (256 aa)).

The protein belongs to the phosphoethanolamine transferase family.

It is found in the cell inner membrane. In terms of biological role, probably does not transfer phosphoethanolamine to lipid A. In Escherichia coli (strain K12), this protein is Putative transferase YhbX (yhbX).